We begin with the raw amino-acid sequence, 495 residues long: Ribitol 5-phosphate transferase FKRP (495 aa).

At 1–6 (MRLTRC) the chain is on the cytoplasmic side. Residues 7 to 29 (QAALAAAITLNLLVLFYVSWLQH) form a helical membrane-spanning segment. Residues 30-495 (QPRNSRARGP…PALLSLTGSG (466 aa)) lie on the Lumenal side of the membrane. Residues Cys168 and Cys191 are joined by a disulfide bond. Asn172 and Asn209 each carry an N-linked (GlcNAc...) asparagine glycan. Positions 289, 296, 317, and 318 each coordinate Zn(2+). A zinc finger loop region spans residues 289 to 318 (CNKETTRCFGTVVGDTPAYLYEERWTPPCC). CDP-L-ribitol is bound by residues Gly345, Arg352, 359 to 364 (WDYDVD), 437 to 438 (QD), and 480 to 482 (NPQ). Mg(2+)-binding residues include Asp360, Asp362, and Asp364.

It belongs to the LicD transferase family. As to quaternary structure, homodimer; disulfide-linked. Tetramer. Forms a complex composed of FKRP, FKTN/fukutin, and RXYLT1/TMEM5. Also exists as large multimeric protein complexes. May interact with the dystrophin-glycoprotein complex (DGC). Mg(2+) serves as cofactor. Post-translationally, N-glycosylated. Expressed in the retina (at protein level). Expressed predominantly in skeletal muscle, placenta, and heart and relatively weakly in brain, lung, liver, kidney, and pancreas.

Its subcellular location is the golgi apparatus membrane. The protein localises to the secreted. It is found in the cell membrane. The protein resides in the sarcolemma. It localises to the rough endoplasmic reticulum. Its subcellular location is the cytoplasm. The enzyme catalyses 3-O-[Rib-ol-P-3-beta-D-GalNAc-(1-&gt;3)-beta-D-GlcNAc-(1-&gt;4)-(O-6-P-alpha-D-Man)]-Thr-[protein] + CDP-L-ribitol = 3-O-[Rib-ol-P-Rib-ol-P-3-beta-D-GalNAc-(1-&gt;3)-beta-D-GlcNAc-(1-&gt;4)-(O-6-P-alpha-D-Man)]-Thr-[protein] + CMP + H(+). It functions in the pathway protein modification; protein glycosylation. Catalyzes the transfer of a ribitol 5-phosphate from CDP-L-ribitol to the ribitol 5-phosphate previously attached by FKTN/fukutin to the phosphorylated O-mannosyl trisaccharide (N-acetylgalactosamine-beta-3-N-acetylglucosamine-beta-4-(phosphate-6-)mannose), a carbohydrate structure present in alpha-dystroglycan (DAG1). This constitutes the second step in the formation of the ribose 5-phosphate tandem repeat which links the phosphorylated O-mannosyl trisaccharide to the ligand binding moiety composed of repeats of 3-xylosyl-alpha-1,3-glucuronic acid-beta-1. The chain is Ribitol 5-phosphate transferase FKRP from Homo sapiens (Human).